We begin with the raw amino-acid sequence, 382 residues long: Na(+)/H(+) antiporter NhaA (382 aa).

Transmembrane regions (helical) follow at residues 11 to 31, 47 to 67, 88 to 108, 116 to 136, 145 to 165, 170 to 190, 261 to 283, 299 to 319, 327 to 347, and 353 to 373; these read FSVPLIAGVVVALLWANLDPA, FHFVVNELFMVLFFGIAAVEI, LATLGGVVGPVLVYLGLNAII, GWGIPTATDIALAWLVARLVF, FLLLLAVADDAIGLAIIAVFY, HPTEPIWLFLTVAGMVVAYIL, IVVDFGLFMFGLANAGVGFSSVG, LGIFAMGYVGRALGFPLPQQV, TGLVAGIGLTVALFVAGVAFV, and GSAKMGALLSGGVSIVAIMLG.

Belongs to the NhaA Na(+)/H(+) (TC 2.A.33) antiporter family.

The protein localises to the cell inner membrane. It catalyses the reaction Na(+)(in) + 2 H(+)(out) = Na(+)(out) + 2 H(+)(in). Its function is as follows. Na(+)/H(+) antiporter that extrudes sodium in exchange for external protons. The polypeptide is Na(+)/H(+) antiporter NhaA (Geobacter sulfurreducens (strain ATCC 51573 / DSM 12127 / PCA)).